Here is a 274-residue protein sequence, read N- to C-terminus: Large ribosomal subunit protein uL2 (274 aa).

2 disordered regions span residues 35–55 and 224–274; these read FGKK…RHRG and AMNP…KLKG. Over residues 45–55 the composition is skewed to basic residues; it reads NHGRITTRHRG. The segment covering 263 to 274 has biased composition (basic and acidic residues); that stretch reads KSSDKYIKKLKG.

Belongs to the universal ribosomal protein uL2 family. As to quaternary structure, part of the 50S ribosomal subunit. Forms a bridge to the 30S subunit in the 70S ribosome.

Functionally, one of the primary rRNA binding proteins. Required for association of the 30S and 50S subunits to form the 70S ribosome, for tRNA binding and peptide bond formation. It has been suggested to have peptidyltransferase activity; this is somewhat controversial. Makes several contacts with the 16S rRNA in the 70S ribosome. This chain is Large ribosomal subunit protein uL2, found in Wolbachia pipientis subsp. Culex pipiens (strain wPip).